Reading from the N-terminus, the 380-residue chain is Endopolygalacturonase AN8327 (380 aa).

Residues 1–19 form the signal peptide; that stretch reads MFYALGPLALFAFATEVMA. A propeptide spanning residues 20–35 is cleaved from the precursor; sequence TPVAYPMTTASPTLAK. A disulfide bridge links Cys-39 with Cys-57. 7 PbH1 repeats span residues 147–169, 170–200, 201–222, 223–243, 252–273, 281–303, and 315–338; these read LTDS…SING, CDGL…DIGE, SSNV…AVNS, GTSI…SIGS, VDTV…RIKA, IKGV…LIEQ, and TSGI…DSDG. Asp-215 serves as the catalytic Proton donor. Cys-217 and Cys-233 are joined by a disulfide. His-237 is a catalytic residue. The N-linked (GlcNAc...) asparagine glycan is linked to Asn-327. A disulfide bond links Cys-345 and Cys-350. The N-linked (GlcNAc...) asparagine glycan is linked to Asn-352. A disulfide bond links Cys-369 and Cys-378.

It belongs to the glycosyl hydrolase 28 family.

It localises to the secreted. The enzyme catalyses (1,4-alpha-D-galacturonosyl)n+m + H2O = (1,4-alpha-D-galacturonosyl)n + (1,4-alpha-D-galacturonosyl)m.. Functionally, involved in maceration and soft-rotting of plant tissue. Hydrolyzes the 1,4-alpha glycosidic bonds of de-esterified pectate in the smooth region of the plant cell wall. The chain is Endopolygalacturonase AN8327 from Emericella nidulans (strain FGSC A4 / ATCC 38163 / CBS 112.46 / NRRL 194 / M139) (Aspergillus nidulans).